The sequence spans 207 residues: Pyridoxal 5'-phosphate synthase subunit PdxT (207 aa).

An L-glutamine-binding site is contributed by 51-53; that stretch reads GES. The active-site Nucleophile is the Cys83. L-glutamine-binding positions include Arg112 and 143–144; that span reads IR. Active-site charge relay system residues include His184 and Glu186.

Belongs to the glutaminase PdxT/SNO family. In terms of assembly, in the presence of PdxS, forms a dodecamer of heterodimers. Only shows activity in the heterodimer.

It catalyses the reaction aldehydo-D-ribose 5-phosphate + D-glyceraldehyde 3-phosphate + L-glutamine = pyridoxal 5'-phosphate + L-glutamate + phosphate + 3 H2O + H(+). The enzyme catalyses L-glutamine + H2O = L-glutamate + NH4(+). Its pathway is cofactor biosynthesis; pyridoxal 5'-phosphate biosynthesis. Functionally, catalyzes the hydrolysis of glutamine to glutamate and ammonia as part of the biosynthesis of pyridoxal 5'-phosphate. The resulting ammonia molecule is channeled to the active site of PdxS. This chain is Pyridoxal 5'-phosphate synthase subunit PdxT, found in Kineococcus radiotolerans (strain ATCC BAA-149 / DSM 14245 / SRS30216).